The primary structure comprises 400 residues: MTQFASPVLHSLLDTDAYKLHMQQAVFHHYYDVHVAAEFRCRGDDLLGIYADAIREQVQAMQHLRLQDDEYQWLSALPFFKADYLNWLREFRFNPEQVTVSNDNGKLDIRLSGPWREVILWEVPLLAVISEMVHRYRSPQADVAQALDTLESKLADFSALTAGLDMSRFHLMDFGTRRRFSREVQETIVKRLQQESWFVGTSNYDLARRLSLTPMGTQAHEWFQAHQQISPDLANSQRAALAAWLEEYPDQLGIALTDCITMDAFLRDFGVEFASRYQGLRHDSGDPVEWGEKAIAHYEKLGIDPQSKTLVFSDNLDLRKAVELYRHFSSRVQLSFGIGTRLTCDIPQVKPLNIVIKLVECNGKPVAKLSDSPGKTICHDKAFVRALRKAFDLPHIKKAS.

H220 carries the post-translational modification Phosphohistidine; by autocatalysis.

The protein belongs to the NAPRTase family. In terms of processing, transiently phosphorylated on a His residue during the reaction cycle. Phosphorylation strongly increases the affinity for substrates and increases the rate of nicotinate D-ribonucleotide production. Dephosphorylation regenerates the low-affinity form of the enzyme, leading to product release.

The catalysed reaction is nicotinate + 5-phospho-alpha-D-ribose 1-diphosphate + ATP + H2O = nicotinate beta-D-ribonucleotide + ADP + phosphate + diphosphate. Its pathway is cofactor biosynthesis; NAD(+) biosynthesis; nicotinate D-ribonucleotide from nicotinate: step 1/1. Its function is as follows. Catalyzes the synthesis of beta-nicotinate D-ribonucleotide from nicotinate and 5-phospho-D-ribose 1-phosphate at the expense of ATP. The protein is Nicotinate phosphoribosyltransferase of Escherichia coli O17:K52:H18 (strain UMN026 / ExPEC).